Here is a 563-residue protein sequence, read N- to C-terminus: Probable tRNA (uracil-O(2)-)-methyltransferase (563 aa).

A C3H1-type zinc finger spans residues 536–563; that stretch reads TIRKAPCWMSLHHPDGCPVGQEACRYEH.

The protein belongs to the TRM44 family.

The protein localises to the cytoplasm. It catalyses the reaction uridine(44) in tRNA(Ser) + S-adenosyl-L-methionine = 2'-O-methyluridine(44) in tRNA(Ser) + S-adenosyl-L-homocysteine + H(+). In terms of biological role, probable adenosyl-L-methionine (AdoMet)-dependent tRNA (uracil-O(2)-)-methyltransferase. The polypeptide is Probable tRNA (uracil-O(2)-)-methyltransferase (Caenorhabditis elegans).